The primary structure comprises 433 residues: Epi-neemfruitin B synthase L1AT (433 aa).

Catalysis depends on proton acceptor residues His151 and Asp372.

Belongs to the plant acyltransferase family. Monomer. In terms of tissue distribution, mainly expressed in petioles and, to a lower extent, in roots.

It carries out the reaction (21S)-21-acetyl-1-hydroxy-apo-melianone + acetyl-CoA = epi-neemfruitin B + acetate + CoA + H(+). The protein operates within secondary metabolite biosynthesis; terpenoid biosynthesis. Functionally, acetyltransferase involved in the biosynthesis of limonoids triterpene natural products such as azadirachtin, an antifeedant widely used as bioinsecticide, and possessing many medicinal applications including anti-tumoral, anti-malarial, anti-rheumatic, antibacterial, anti-inflammatory, anti-pyretic and diuretic effects. Catalyzes the formation of epi-neemfruitin B from (21S)-21-acetyl-1-hydroxy-apo-melianone. In Melia azedarach (Chinaberry tree), this protein is Epi-neemfruitin B synthase L1AT.